Here is a 72-residue protein sequence, read N- to C-terminus: Alpha-elapitoxin-Dpp2a (72 aa).

5 disulfides stabilise this stretch: Cys3–Cys21, Cys14–Cys42, Cys27–Cys31, Cys46–Cys57, and Cys58–Cys63.

Belongs to the three-finger toxin family. Long-chain subfamily. Type II alpha-neurotoxin sub-subfamily. In terms of tissue distribution, expressed by the venom gland.

Its subcellular location is the secreted. In terms of biological role, binds with high affinity to muscular (alpha-1/CHRNA1) and neuronal (alpha-7/CHRNA7) nicotinic acetylcholine receptor (nAChR) and inhibits acetylcholine from binding to the receptor, thereby impairing neuromuscular and neuronal transmission. This is Alpha-elapitoxin-Dpp2a from Dendroaspis polylepis polylepis (Black mamba).